Here is a 617-residue protein sequence, read N- to C-terminus: Proline--tRNA ligase (617 aa).

Belongs to the class-II aminoacyl-tRNA synthetase family. ProS type 1 subfamily. As to quaternary structure, homodimer.

The protein localises to the cytoplasm. The enzyme catalyses tRNA(Pro) + L-proline + ATP = L-prolyl-tRNA(Pro) + AMP + diphosphate. In terms of biological role, catalyzes the attachment of proline to tRNA(Pro) in a two-step reaction: proline is first activated by ATP to form Pro-AMP and then transferred to the acceptor end of tRNA(Pro). As ProRS can inadvertently accommodate and process non-cognate amino acids such as alanine and cysteine, to avoid such errors it has two additional distinct editing activities against alanine. One activity is designated as 'pretransfer' editing and involves the tRNA(Pro)-independent hydrolysis of activated Ala-AMP. The other activity is designated 'posttransfer' editing and involves deacylation of mischarged Ala-tRNA(Pro). The misacylated Cys-tRNA(Pro) is not edited by ProRS. This Streptococcus pneumoniae (strain P1031) protein is Proline--tRNA ligase.